Here is a 252-residue protein sequence, read N- to C-terminus: MTTSWVLQSKDLSNTDLVHIAKLAEQAERYDDMAAAMKRYTEASGNLGNEERNLLSVAYKNVVGARRSAWRVIHGSEMKAVNDRTKKQIAEEYRIKMEKELNTICNQVLALLEDYLLPNASPDDSKVFFLKMQGDYYRYLAEVATDDARTEVVQKSLDAYTKATTAAENLPTTHPIRLGLALNFSVFFYEIQNDAAKACELAKSAFDSAIAELDQLQDDSYKDSTLIMQLLRDNLTLWASDQTAEGDVENDS.

It belongs to the 14-3-3 family.

The sequence is that of 14-3-3 protein homolog 1 from Schistosoma mansoni (Blood fluke).